The primary structure comprises 199 residues: NADH-quinone oxidoreductase subunit C (199 aa).

Belongs to the complex I 30 kDa subunit family. In terms of assembly, NDH-1 is composed of 14 different subunits. Subunits NuoB, C, D, E, F, and G constitute the peripheral sector of the complex.

It localises to the cell membrane. It carries out the reaction a quinone + NADH + 5 H(+)(in) = a quinol + NAD(+) + 4 H(+)(out). NDH-1 shuttles electrons from NADH, via FMN and iron-sulfur (Fe-S) centers, to quinones in the respiratory chain. The immediate electron acceptor for the enzyme in this species is believed to be ubiquinone. Couples the redox reaction to proton translocation (for every two electrons transferred, four hydrogen ions are translocated across the cytoplasmic membrane), and thus conserves the redox energy in a proton gradient. The sequence is that of NADH-quinone oxidoreductase subunit C from Polynucleobacter asymbioticus (strain DSM 18221 / CIP 109841 / QLW-P1DMWA-1) (Polynucleobacter necessarius subsp. asymbioticus).